The sequence spans 426 residues: Mitogen-activated protein kinase 8 (426 aa).

The Protein kinase domain maps to 26–321 (YQNLKPIGSG…VDDALQHPYI (296 aa)). ATP is bound by residues 33 to 38 (GSGAQG) and Lys-55. The Proton acceptor role is filled by Asp-151. Thr-183 bears the Phosphothreonine mark. Positions 183 to 185 (TPY) match the TXY motif. Residue Tyr-185 is modified to Phosphotyrosine. The disordered stretch occupies residues 375–426 (QPAPLGAAVTDGSQAHTSSSSGDASSMSTDPTLPSDTDSSLETSAGTLGCCR). Low complexity predominate over residues 384–404 (TDGSQAHTSSSSGDASSMSTD). A compositionally biased stretch (polar residues) spans 405-420 (PTLPSDTDSSLETSAG).

The protein belongs to the protein kinase superfamily. CMGC Ser/Thr protein kinase family. MAP kinase subfamily. Requires Mg(2+) as cofactor. In terms of processing, dually phosphorylated on Thr-183 and Tyr-185, which activates the enzyme. Strongly expressed in presumptive ectoderm and mesoderm regions and weakly expressed in endoderm regions during early stages of embryo development. Expressed in the head and dorsal regions during neurula and tailbud stages.

The protein localises to the cytoplasm. Its subcellular location is the nucleus. It localises to the synapse. The catalysed reaction is L-seryl-[protein] + ATP = O-phospho-L-seryl-[protein] + ADP + H(+). The enzyme catalyses L-threonyl-[protein] + ATP = O-phospho-L-threonyl-[protein] + ADP + H(+). With respect to regulation, activated by threonine and tyrosine phosphorylation, potentially by the dual-specificity kinase, MKK7. Indirectly activated by Wnt5a. In terms of biological role, responds to activation by environmental stress and pro-inflammatory cytokines by phosphorylating a number of transcription factors, and thus regulating transcriptional activity. Regulates morphogenic cell movements, controlling convergent extension during gastrulation. May play a role in the regulation of the circadian clock. In Xenopus laevis (African clawed frog), this protein is Mitogen-activated protein kinase 8 (mapk8).